The primary structure comprises 385 residues: Chaperone protein DnaJ (385 aa).

Positions 5 to 72 constitute a J domain; the sequence is DYYEVLGVGK…QKRAAYDQFG (68 aa). Positions 26-48 are disordered; that stretch reads RKLAMKHHPDRNQGDGAKASEEK. Basic and acidic residues predominate over residues 35–48; it reads DRNQGDGAKASEEK. The CR-type zinc finger occupies 145–223; it reads GKESQIRIPT…CNGAGKVKKQ (79 aa). Positions 158, 161, 175, 178, 197, 200, 211, and 214 each coordinate Zn(2+). 4 CXXCXGXG motif repeats span residues 158-165, 175-182, 197-204, and 211-218; these read CDTCHGSG, CTTCHGAG, CPHCHGSG, and CTSCNGAG. Residues 362–385 are disordered; that stretch reads FRKGGDKHSPTSKSWTDRVKDLFK.

Belongs to the DnaJ family. As to quaternary structure, homodimer. The cofactor is Zn(2+).

The protein localises to the cytoplasm. In terms of biological role, participates actively in the response to hyperosmotic and heat shock by preventing the aggregation of stress-denatured proteins and by disaggregating proteins, also in an autonomous, DnaK-independent fashion. Unfolded proteins bind initially to DnaJ; upon interaction with the DnaJ-bound protein, DnaK hydrolyzes its bound ATP, resulting in the formation of a stable complex. GrpE releases ADP from DnaK; ATP binding to DnaK triggers the release of the substrate protein, thus completing the reaction cycle. Several rounds of ATP-dependent interactions between DnaJ, DnaK and GrpE are required for fully efficient folding. Also involved, together with DnaK and GrpE, in the DNA replication of plasmids through activation of initiation proteins. In Leptothrix cholodnii (strain ATCC 51168 / LMG 8142 / SP-6) (Leptothrix discophora (strain SP-6)), this protein is Chaperone protein DnaJ.